Reading from the N-terminus, the 267-residue chain is Putative carbamate hydrolase RutD (267 aa).

One can recognise an AB hydrolase-1 domain in the interval proline 14–leucine 115.

This sequence belongs to the AB hydrolase superfamily. Hydrolase RutD family.

It carries out the reaction carbamate + 2 H(+) = NH4(+) + CO2. Functionally, involved in pyrimidine catabolism. May facilitate the hydrolysis of carbamate, a reaction that can also occur spontaneously. This chain is Putative carbamate hydrolase RutD, found in Cronobacter turicensis (strain DSM 18703 / CCUG 55852 / LMG 23827 / z3032).